We begin with the raw amino-acid sequence, 339 residues long: NADH-quinone oxidoreductase subunit H (339 aa).

A run of 9 helical transmembrane segments spans residues F10–V30, P50–F70, I82–I102, V115–G135, I155–L175, L187–L207, M235–T255, I275–I295, and G311–F331.

It belongs to the complex I subunit 1 family. As to quaternary structure, NDH-1 is composed of 14 different subunits. Subunits NuoA, H, J, K, L, M, N constitute the membrane sector of the complex.

It is found in the cell inner membrane. It catalyses the reaction a quinone + NADH + 5 H(+)(in) = a quinol + NAD(+) + 4 H(+)(out). In terms of biological role, NDH-1 shuttles electrons from NADH, via FMN and iron-sulfur (Fe-S) centers, to quinones in the respiratory chain. The immediate electron acceptor for the enzyme in this species is believed to be ubiquinone. Couples the redox reaction to proton translocation (for every two electrons transferred, four hydrogen ions are translocated across the cytoplasmic membrane), and thus conserves the redox energy in a proton gradient. This subunit may bind ubiquinone. The protein is NADH-quinone oxidoreductase subunit H of Rickettsia typhi (strain ATCC VR-144 / Wilmington).